The following is a 101-amino-acid chain: Ascorbate-specific PTS system EIIB component (101 aa).

Residues 3-96 enclose the PTS EIIB type-2 domain; it reads VRILAVCGNG…KLLEVIKAHF (94 aa). C9 serves as the catalytic Phosphocysteine intermediate. A Phosphocysteine modification is found at C9.

Its subcellular location is the cytoplasm. The catalysed reaction is N(pros)-phospho-L-histidyl-[protein] + L-ascorbate(out) = L-ascorbate 6-phosphate(in) + L-histidyl-[protein]. In terms of biological role, the phosphoenolpyruvate-dependent sugar phosphotransferase system (sugar PTS), a major carbohydrate active transport system, catalyzes the phosphorylation of incoming sugar substrates concomitantly with their translocation across the cell membrane. The enzyme II UlaABC PTS system is involved in ascorbate transport. This is Ascorbate-specific PTS system EIIB component (ulaB) from Escherichia coli O6:H1 (strain CFT073 / ATCC 700928 / UPEC).